Here is a 216-residue protein sequence, read N- to C-terminus: Protein-L-isoaspartate O-methyltransferase 1 (216 aa).

Ser-60 is a catalytic residue.

Belongs to the methyltransferase superfamily. L-isoaspartyl/D-aspartyl protein methyltransferase family.

The protein resides in the cytoplasm. The catalysed reaction is [protein]-L-isoaspartate + S-adenosyl-L-methionine = [protein]-L-isoaspartate alpha-methyl ester + S-adenosyl-L-homocysteine. In terms of biological role, catalyzes the methyl esterification of L-isoaspartyl residues in peptides and proteins that result from spontaneous decomposition of normal L-aspartyl and L-asparaginyl residues. It plays a role in the repair and/or degradation of damaged proteins. The protein is Protein-L-isoaspartate O-methyltransferase 1 (pcm1) of Archaeoglobus fulgidus (strain ATCC 49558 / DSM 4304 / JCM 9628 / NBRC 100126 / VC-16).